We begin with the raw amino-acid sequence, 238 residues long: Protein E6 (238 aa).

Residues lysine 40–threonine 51 are compositionally biased toward basic and acidic residues. Disordered regions lie at residues lysine 40–glutamate 64 and glutamate 210–proline 238. Residues glutamate 227–proline 238 are compositionally biased toward acidic residues.

As to expression, it is predominantly expressed in fiber cells.

The protein localises to the secreted. It is found in the cell wall. In Gossypium hirsutum (Upland cotton), this protein is Protein E6 (E6).